The following is a 107-amino-acid chain: Small ribosomal subunit protein uS17 (107 aa).

This sequence belongs to the universal ribosomal protein uS17 family. As to quaternary structure, part of the 30S ribosomal subunit.

In terms of biological role, one of the primary rRNA binding proteins, it binds specifically to the 5'-end of 16S ribosomal RNA. The protein is Small ribosomal subunit protein uS17 of Thermotoga sp. (strain RQ2).